A 186-amino-acid chain; its full sequence is Imidazoleglycerol-phosphate dehydratase (186 aa).

It belongs to the imidazoleglycerol-phosphate dehydratase family.

Its subcellular location is the cytoplasm. It carries out the reaction D-erythro-1-(imidazol-4-yl)glycerol 3-phosphate = 3-(imidazol-4-yl)-2-oxopropyl phosphate + H2O. It functions in the pathway amino-acid biosynthesis; L-histidine biosynthesis; L-histidine from 5-phospho-alpha-D-ribose 1-diphosphate: step 6/9. The chain is Imidazoleglycerol-phosphate dehydratase from Dictyoglomus thermophilum (strain ATCC 35947 / DSM 3960 / H-6-12).